The primary structure comprises 176 residues: Adenine phosphoribosyltransferase (176 aa).

This sequence belongs to the purine/pyrimidine phosphoribosyltransferase family. In terms of assembly, homodimer.

Its subcellular location is the cytoplasm. It carries out the reaction AMP + diphosphate = 5-phospho-alpha-D-ribose 1-diphosphate + adenine. It participates in purine metabolism; AMP biosynthesis via salvage pathway; AMP from adenine: step 1/1. In terms of biological role, catalyzes a salvage reaction resulting in the formation of AMP, that is energically less costly than de novo synthesis. The chain is Adenine phosphoribosyltransferase from Borrelia garinii subsp. bavariensis (strain ATCC BAA-2496 / DSM 23469 / PBi) (Borreliella bavariensis).